Reading from the N-terminus, the 202-residue chain is Recombination protein RecR (202 aa).

A C4-type zinc finger spans residues 61–76; sequence CARCNSFTEDEVCATC. One can recognise a Toprim domain in the interval 84-179; that stretch reads GLLCIVETPA…KVTRLARGVP (96 aa).

This sequence belongs to the RecR family.

May play a role in DNA repair. It seems to be involved in an RecBC-independent recombinational process of DNA repair. It may act with RecF and RecO. This chain is Recombination protein RecR, found in Bordetella bronchiseptica (strain ATCC BAA-588 / NCTC 13252 / RB50) (Alcaligenes bronchisepticus).